Here is a 234-residue protein sequence, read N- to C-terminus: Demethylmenaquinone methyltransferase (234 aa).

S-adenosyl-L-methionine-binding positions include Thr58, Asp79, and 106-107; that span reads NA.

Belongs to the class I-like SAM-binding methyltransferase superfamily. MenG/UbiE family.

The enzyme catalyses a 2-demethylmenaquinol + S-adenosyl-L-methionine = a menaquinol + S-adenosyl-L-homocysteine + H(+). It participates in quinol/quinone metabolism; menaquinone biosynthesis; menaquinol from 1,4-dihydroxy-2-naphthoate: step 2/2. Its function is as follows. Methyltransferase required for the conversion of demethylmenaquinol (DMKH2) to menaquinol (MKH2). The sequence is that of Demethylmenaquinone methyltransferase from Geobacillus sp. (strain WCH70).